The chain runs to 117 residues: Immunoglobulin heavy variable 1-46 (117 aa).

An N-terminal signal peptide occupies residues 1–19; sequence MDWTWRVFCLLAVAPGAHS. Residues 20-44 form a framework-1 region; that stretch reads QVQLVQSGAEVKKPGASVKVSCKAS. The region spanning 20 to 117 is the Ig-like domain; the sequence is QVQLVQSGAE…EDTAVYYCAR (98 aa). An intrachain disulfide couples Cys-41 to Cys-115. The tract at residues 45 to 52 is complementarity-determining-1; that stretch reads GYTFTSYY. The segment at 53–69 is framework-2; it reads MHWVRQAPGQGLEWMGI. The tract at residues 70-77 is complementarity-determining-2; sequence INPSGGST. Positions 78-115 are framework-3; it reads SYAQKFQGRVTMTRDTSTSTVYMELSSLRSEDTAVYYC. The interval 116-117 is complementarity-determining-3; sequence AR.

Immunoglobulins are composed of two identical heavy chains and two identical light chains; disulfide-linked.

The protein localises to the secreted. Its subcellular location is the cell membrane. In terms of biological role, v region of the variable domain of immunoglobulin heavy chains that participates in the antigen recognition. Immunoglobulins, also known as antibodies, are membrane-bound or secreted glycoproteins produced by B lymphocytes. In the recognition phase of humoral immunity, the membrane-bound immunoglobulins serve as receptors which, upon binding of a specific antigen, trigger the clonal expansion and differentiation of B lymphocytes into immunoglobulins-secreting plasma cells. Secreted immunoglobulins mediate the effector phase of humoral immunity, which results in the elimination of bound antigens. The antigen binding site is formed by the variable domain of one heavy chain, together with that of its associated light chain. Thus, each immunoglobulin has two antigen binding sites with remarkable affinity for a particular antigen. The variable domains are assembled by a process called V-(D)-J rearrangement and can then be subjected to somatic hypermutations which, after exposure to antigen and selection, allow affinity maturation for a particular antigen. This is Immunoglobulin heavy variable 1-46 from Homo sapiens (Human).